A 468-amino-acid chain; its full sequence is Siroheme synthase (468 aa).

Residues 1–203 form a precorrin-2 dehydrogenase /sirohydrochlorin ferrochelatase region; that stretch reads MQYLPIFLNI…GQEEEAEGAL (203 aa). NAD(+) is bound by residues 22-23 and 43-44; these read TV and PK. Serine 128 carries the phosphoserine modification. Residues 216–468 are uroporphyrinogen-III C-methyltransferase; it reads GEVYLVGAGP…VPDREPLDAR (253 aa). Residue proline 225 participates in S-adenosyl-L-methionine binding. Aspartate 248 functions as the Proton acceptor in the catalytic mechanism. Lysine 270 acts as the Proton donor in catalysis. Residues 301-303, isoleucine 306, 331-332, methionine 383, and glycine 412 each bind S-adenosyl-L-methionine; these read GGD and TA.

In the N-terminal section; belongs to the precorrin-2 dehydrogenase / sirohydrochlorin ferrochelatase family. This sequence in the C-terminal section; belongs to the precorrin methyltransferase family.

The enzyme catalyses uroporphyrinogen III + 2 S-adenosyl-L-methionine = precorrin-2 + 2 S-adenosyl-L-homocysteine + H(+). The catalysed reaction is precorrin-2 + NAD(+) = sirohydrochlorin + NADH + 2 H(+). It carries out the reaction siroheme + 2 H(+) = sirohydrochlorin + Fe(2+). It participates in cofactor biosynthesis; adenosylcobalamin biosynthesis; precorrin-2 from uroporphyrinogen III: step 1/1. It functions in the pathway cofactor biosynthesis; adenosylcobalamin biosynthesis; sirohydrochlorin from precorrin-2: step 1/1. The protein operates within porphyrin-containing compound metabolism; siroheme biosynthesis; precorrin-2 from uroporphyrinogen III: step 1/1. Its pathway is porphyrin-containing compound metabolism; siroheme biosynthesis; siroheme from sirohydrochlorin: step 1/1. It participates in porphyrin-containing compound metabolism; siroheme biosynthesis; sirohydrochlorin from precorrin-2: step 1/1. Multifunctional enzyme that catalyzes the SAM-dependent methylations of uroporphyrinogen III at position C-2 and C-7 to form precorrin-2 via precorrin-1. Then it catalyzes the NAD-dependent ring dehydrogenation of precorrin-2 to yield sirohydrochlorin. Finally, it catalyzes the ferrochelation of sirohydrochlorin to yield siroheme. The chain is Siroheme synthase from Nitrosococcus oceani (strain ATCC 19707 / BCRC 17464 / JCM 30415 / NCIMB 11848 / C-107).